Here is a 327-residue protein sequence, read N- to C-terminus: MEGENSSIEKGLLLIRKEESANTTPFLVFTTFIIVSASFSFGVALGHTAGTMASIMEDLDLSITQFSVFGSLLTFGGMIGALFSATIADSFGCKMTLWITEVFCISGWLAIALAKNIIWLDLGRFFVGIGVGLLSYVVPVYIAEITPKTVRGTFTFSNQLLQNCGVATAYYLGNFMSWRIIALIGILPCLIQLVGLFFVPESPRWLAKEGRDEECEVVLQKLRGDEADIVKETQEILISVEASANISMRSLFKKKYTHQLTIGIGLMLLQQLSGSAGLGYYTGSVFDLAGFPSRIGMTVLSIVVVPKAILGLILVERWGRRPLLMVM.

8 helical membrane passes run 26 to 46 (FLVFTTFIIVSASFSFGVALG), 68 to 88 (VFGSLLTFGGMIGALFSATIA), 102 to 122 (VFCISGWLAIALAKNIIWLDL), 125 to 145 (FFVGIGVGLLSYVVPVYIAEI), 152 to 172 (GTFTFSNQLLQNCGVATAYYL), 180 to 200 (IIALIGILPCLIQLVGLFFVP), 260 to 280 (LTIGIGLMLLQQLSGSAGLGY), and 295 to 315 (IGMTVLSIVVVPKAILGLILV).

Belongs to the major facilitator superfamily. Sugar transporter (TC 2.A.1.1) family.

It is found in the membrane. Sugar transporter. The polypeptide is Sugar transporter ERD6-like 9 (Arabidopsis thaliana (Mouse-ear cress)).